Reading from the N-terminus, the 524-residue chain is Probable endopeptidase p60 (524 aa).

Positions 1-27 are cleaved as a signal peptide; it reads MNMKKATIAATAGIAVTAFAAPTIASA. One can recognise a LysM 1 domain in the interval 28 to 71; that stretch reads STVVVEAGDTLWGIAQSKGTTVDALKKANNLTSDKIVPGQKLQV. The region spanning 78–142 is the SH3b domain; the sequence is KTEKSVSATW…VNGKYLGDAV (65 aa). The segment at 150 to 188 is disordered; the sequence is QEVKQETTKQTAPAAETKTEVKQSTPAPTAPKAAETKTA. Residues 174-188 are compositionally biased toward low complexity; it reads TPAPTAPKAAETKTA. The region spanning 196–239 is the LysM 2 domain; sequence TTHTVKSGDTIWALSVKYGASVQDLMSWNNLSSSSIYVGQKIAV. Residues 272–299 are compositionally biased toward low complexity; it reads NTNTTVKKEVTTQTQTNTTKAPAQAAKP. A disordered region spans residues 272–313; sequence NTNTTVKKEVTTQTQTNTTKAPAQAAKPAPAPAPAPTVNTNA. The LysM 3 domain maps to 314-357; sequence STYTVKSGDSLSKIANTFGTSVSKIKALNNLTSDNLQVGTVLKV. Residues 360–408 are disordered; it reads TVPTTNTNNNSNTTAPTTNTSNNNTSSNTSTPSKNTNTNTNQGSSNSAS. The span at 362–408 shows a compositional bias: low complexity; that stretch reads PTTNTNNNSNTTAPTTNTSNNNTSSNTSTPSKNTNTNTNQGSSNSAS. The 119-residue stretch at 406–524 folds into the NlpC/P60 domain; the sequence is SASASALIAE…GKYLVGFGRV (119 aa). Cys436 serves as the catalytic Nucleophile. His486 serves as the catalytic Proton acceptor. Asn498 is an active-site residue.

The protein belongs to the peptidase C40 family.

Functionally, this major extracellular protein may be involved in the invasion of non-professional phagocytic cells by Listeria. The sequence is that of Probable endopeptidase p60 (iap) from Listeria welshimeri.